Consider the following 264-residue polypeptide: ATP synthase subunit a (264 aa).

A run of 6 helical transmembrane segments spans residues 29 to 49 (TWHI…LWLF), 90 to 110 (IAPL…MDMI), 134 to 154 (DLNI…YYSI), 177 to 197 (IPVN…SLAL), 208 to 228 (LIFI…ALGV), and 235 to 255 (LIFH…LTIV).

This sequence belongs to the ATPase A chain family. As to quaternary structure, F-type ATPases have 2 components, CF(1) - the catalytic core - and CF(0) - the membrane proton channel. CF(1) has five subunits: alpha(3), beta(3), gamma(1), delta(1), epsilon(1). CF(0) has three main subunits: a(1), b(2) and c(9-12). The alpha and beta chains form an alternating ring which encloses part of the gamma chain. CF(1) is attached to CF(0) by a central stalk formed by the gamma and epsilon chains, while a peripheral stalk is formed by the delta and b chains.

It is found in the cell inner membrane. In terms of biological role, key component of the proton channel; it plays a direct role in the translocation of protons across the membrane. This chain is ATP synthase subunit a, found in Shewanella loihica (strain ATCC BAA-1088 / PV-4).